Here is a 348-residue protein sequence, read N- to C-terminus: DNA ligase C1 (348 aa).

Catalysis depends on lysine 32, which acts as the N6-AMP-lysine intermediate.

The protein belongs to the ATP-dependent DNA ligase family. A divalent metal cation is required as a cofactor.

It carries out the reaction ATP + (deoxyribonucleotide)n-3'-hydroxyl + 5'-phospho-(deoxyribonucleotide)m = (deoxyribonucleotide)n+m + AMP + diphosphate.. In terms of biological role, DNA ligase that seals nicks in double-stranded DNA during DNA replication, DNA recombination and DNA repair. Has weak intrinsic nick joining activities and accumulates DNA-adenylate. Acts as a backup for LigD in the Ku-LigD-dependent NHEJ pathway. This is DNA ligase C1 (ligC) from Mycolicibacterium smegmatis (strain ATCC 700084 / mc(2)155) (Mycobacterium smegmatis).